A 956-amino-acid chain; its full sequence is Thrombospondin-3 (956 aa).

Positions 1–21 (MEKPELWGVLALLLLCSYTCG) are cleaved as a signal peptide. The Laminin G-like domain maps to 22 to 193 (SQDLQVIDLL…VESMKIILGG (172 aa)). 21 cysteine pairs are disulfide-bonded: C278/C289, C283/C300, C303/C314, C320/C332, C326/C341, C344/C368, C374/C388, C382/C397, C400/C412, C418/C432, C426/C442, C444/C455, C471/C478, C483/C503, C519/C539, C542/C562, C578/C598, C601/C621, C639/C659, C679/C699, and C715/C936. The N-linked (GlcNAc...) asparagine glycan is linked to N310. One can recognise an EGF-like 1; calcium-binding domain in the interval 316-354 (DINECAHADPCFPGSSCINTMPGFHCEACPPGYKGTRVS). Positions 370-410 (DIDECNDGNNGGCDPNSICTNTVGSFKCGPCRLGFLGNQSQ) constitute an EGF-like 2; calcium-binding domain. The N-linked (GlcNAc...) asparagine glycan is linked to N407. Residues 414–456 (PARTCHSPAHSPCHIHAHCLFERNGAVSCQCNVGWAGNGNVCG) enclose the EGF-like 3 domain. 8 TSP type-3 repeats span residues 457-491 (PDTD…NSGQ), 492-527 (EDAD…NKDQ), 528-550 (QNSD…NNDQ), 551-586 (KDTD…NPLQ), 587-609 (TDRD…NPTQ), 610-647 (TDAD…NSSQ), 648-687 (LDSD…NPNQ), and 688-723 (KDSD…EVTL). 2 disordered regions span residues 518-537 (NCRL…SFGD) and 546-699 (PNND…GDVC). Residues 555-568 (GNGEGDACDNDVDG) are compositionally biased toward acidic residues. The span at 612–628 (ADSDLVGDVCDTNEDSD) shows a compositional bias: acidic residues. N644 is a glycosylation site (N-linked (GlcNAc...) asparagine). Acidic residues predominate over residues 650–667 (SDNDGLGDECDGDDDNDG). The TSP C-terminal domain occupies 727-941 (RAYQTVILDP…LQYRCNDTVP (215 aa)). N937 carries N-linked (GlcNAc...) asparagine glycosylation.

Belongs to the thrombospondin family. In terms of assembly, oligomer; disulfide-linked. As to expression, brain, lung and cartilage.

In terms of biological role, adhesive glycoprotein that mediates cell-to-cell and cell-to-matrix interactions. Can bind to fibrinogen, fibronectin, laminin and type V collagen. The protein is Thrombospondin-3 (Thbs3) of Mus musculus (Mouse).